Here is a 182-residue protein sequence, read N- to C-terminus: Adenine phosphoribosyltransferase (182 aa).

It belongs to the purine/pyrimidine phosphoribosyltransferase family. As to quaternary structure, homodimer.

It localises to the cytoplasm. The enzyme catalyses AMP + diphosphate = 5-phospho-alpha-D-ribose 1-diphosphate + adenine. The protein operates within purine metabolism; AMP biosynthesis via salvage pathway; AMP from adenine: step 1/1. Its function is as follows. Catalyzes a salvage reaction resulting in the formation of AMP, that is energically less costly than de novo synthesis. The sequence is that of Adenine phosphoribosyltransferase from Campylobacter fetus subsp. fetus (strain 82-40).